The chain runs to 344 residues: Aspartate carbamoyltransferase catalytic subunit (344 aa).

Positions Met-1–Asp-30 are disordered. Residues Arg-88 and Thr-89 each coordinate carbamoyl phosphate. Residue Lys-116 participates in L-aspartate binding. 3 residues coordinate carbamoyl phosphate: Arg-138, His-166, and Gln-169. Positions 199 and 253 each coordinate L-aspartate. Gly-294 and Pro-295 together coordinate carbamoyl phosphate.

Belongs to the aspartate/ornithine carbamoyltransferase superfamily. ATCase family. In terms of assembly, heterododecamer (2C3:3R2) of six catalytic PyrB chains organized as two trimers (C3), and six regulatory PyrI chains organized as three dimers (R2).

The enzyme catalyses carbamoyl phosphate + L-aspartate = N-carbamoyl-L-aspartate + phosphate + H(+). The protein operates within pyrimidine metabolism; UMP biosynthesis via de novo pathway; (S)-dihydroorotate from bicarbonate: step 2/3. Catalyzes the condensation of carbamoyl phosphate and aspartate to form carbamoyl aspartate and inorganic phosphate, the committed step in the de novo pyrimidine nucleotide biosynthesis pathway. The polypeptide is Aspartate carbamoyltransferase catalytic subunit (Sphingopyxis alaskensis (strain DSM 13593 / LMG 18877 / RB2256) (Sphingomonas alaskensis)).